We begin with the raw amino-acid sequence, 250 residues long: ADPR responsive transcriptional repressor NtrR (250 aa).

The region spanning 26 to 157 (LMTVDMAIFS…DHHDLLQQAF (132 aa)) is the Nudix hydrolase domain. Positions 62–85 (GFVDLEQDQNLMACAHRKLLEKTG) match the Nudix box motif. The interval 164–237 (TRYTALPISL…RFALQDYDFN (74 aa)) is winged helix-like DNA-binding region.

DNA binding is efficiently suppressed in the presence of ADP-ribose (ADPR) or phospho-ADPR. Accumulation of ADPR resulting from NAD degradation may be interpreted by the cell as a signal to activate recycling of nicotinamide. Functionally, involved in the transcriptional regulation of the nondeamidating salvage pathway for production of NAD from nicotinamide. Represses expression of the prs-nadV-nrtR operon by binding to the DNA region located upstream of the operon, thus blocking the nondeamidating pathway. The protein is ADPR responsive transcriptional repressor NtrR of Acinetobacter baylyi (strain ATCC 33305 / BD413 / ADP1).